The sequence spans 683 residues: Translation initiation factor IF-2 (683 aa).

Positions 182–351 (KRPPVVTVMG…ILTAEMEELK (170 aa)) constitute a tr-type G domain. The segment at 191–198 (GHVDHGKT) is G1. Residue 191 to 198 (GHVDHGKT) participates in GTP binding. Positions 216 to 220 (GITQH) are G2. The segment at 237–240 (DTPG) is G3. GTP is bound by residues 237 to 241 (DTPGH) and 291 to 294 (NKID). Residues 291-294 (NKID) are G4. Residues 327 to 329 (SAH) form a G5 region.

The protein belongs to the TRAFAC class translation factor GTPase superfamily. Classic translation factor GTPase family. IF-2 subfamily.

It is found in the cytoplasm. One of the essential components for the initiation of protein synthesis. Protects formylmethionyl-tRNA from spontaneous hydrolysis and promotes its binding to the 30S ribosomal subunits. Also involved in the hydrolysis of GTP during the formation of the 70S ribosomal complex. The chain is Translation initiation factor IF-2 from Clostridium novyi (strain NT).